The primary structure comprises 227 residues: Phosphoribosylformylglycinamidine synthase subunit PurQ (227 aa).

A Glutamine amidotransferase type-1 domain is found at 2-226 (KFAVIQFPGS…VKAWKEEQVN (225 aa)). Cys-86 serves as the catalytic Nucleophile. Active-site residues include His-195 and Glu-197.

Part of the FGAM synthase complex composed of 1 PurL, 1 PurQ and 2 PurS subunits.

It localises to the cytoplasm. The enzyme catalyses N(2)-formyl-N(1)-(5-phospho-beta-D-ribosyl)glycinamide + L-glutamine + ATP + H2O = 2-formamido-N(1)-(5-O-phospho-beta-D-ribosyl)acetamidine + L-glutamate + ADP + phosphate + H(+). It catalyses the reaction L-glutamine + H2O = L-glutamate + NH4(+). It participates in purine metabolism; IMP biosynthesis via de novo pathway; 5-amino-1-(5-phospho-D-ribosyl)imidazole from N(2)-formyl-N(1)-(5-phospho-D-ribosyl)glycinamide: step 1/2. Its function is as follows. Part of the phosphoribosylformylglycinamidine synthase complex involved in the purines biosynthetic pathway. Catalyzes the ATP-dependent conversion of formylglycinamide ribonucleotide (FGAR) and glutamine to yield formylglycinamidine ribonucleotide (FGAM) and glutamate. The FGAM synthase complex is composed of three subunits. PurQ produces an ammonia molecule by converting glutamine to glutamate. PurL transfers the ammonia molecule to FGAR to form FGAM in an ATP-dependent manner. PurS interacts with PurQ and PurL and is thought to assist in the transfer of the ammonia molecule from PurQ to PurL. The protein is Phosphoribosylformylglycinamidine synthase subunit PurQ of Listeria monocytogenes serotype 4a (strain HCC23).